Consider the following 521-residue polypeptide: Vang-like protein 2 (521 aa).

Positions 1–81 (MDTESQYSGY…TTVVTGTSEH (81 aa)) are disordered. The Cytoplasmic segment spans residues 1–108 (MDTESQYSGY…VPLDCSRHLG (108 aa)). The segment covering 15–33 (GHSRSSRKHRDRRDRHRSK) has biased composition (basic residues). Residues 57 to 67 (ESTRGDERDDN) show a composition bias toward basic and acidic residues. Residues 69-81 (GETTTVVTGTSEH) show a composition bias toward low complexity. The chain crosses the membrane as a helical span at residues 109 to 129 (VAAGATLALLSFLTPLAFLLL). The Extracellular segment spans residues 130 to 147 (PPLLWREELEPCGTACEG). Residues 148 to 168 (LFISVAFKLLILLLGSWALFF) form a helical membrane-spanning segment. The Cytoplasmic segment spans residues 169–178 (RRPKASLPRV). The helical transmembrane segment at 179–199 (FVLRALLMVLVFLLVVSYWLF) threads the bilayer. At 200–217 (YGVRILDARERSYQGVVQ) the chain is on the extracellular side. Residues 218–238 (FAVSLVDALLFVHYLAVVLLE) traverse the membrane as a helical segment. Over 239-521 (LRQLQPQFTL…VMRLQSETSV (283 aa)) the chain is Cytoplasmic.

The protein belongs to the Vang family. In terms of assembly, homodimer and heterodimer with VANGL1. Interacts through its C-terminal region with the N-terminal half of DVL1, DVL2 and DVL3. The PDZ domain of DVL1, DVL2 and DVL3 is required for the interaction. Also interacts with the PDZ domains of MAGI3, SCRIB/SCRB1 and FZD3. Interacts with PRICKLE3.

It is found in the cell membrane. In terms of biological role, involved in the control of early morphogenesis and patterning of both axial midline structures and the development of neural plate. Plays a role in the regulation of planar cell polarity, particularly in the orientation of stereociliary bundles in the cochlea. Required for polarization and movement of myocardializing cells in the outflow tract and seems to act via RHOA signaling to regulate this process. Required for cell surface localization of FZD3 and FZD6 in the inner ear. The chain is Vang-like protein 2 (VANGL2) from Homo sapiens (Human).